The following is a 479-amino-acid chain: Glutamate--tRNA ligase (479 aa).

Residues 21 to 31 (PSPTGYLHVGG) carry the 'HIGH' region motif. Residues 248–252 (KLSKR) carry the 'KMSKS' region motif. Residue Lys-251 participates in ATP binding.

This sequence belongs to the class-I aminoacyl-tRNA synthetase family. Glutamate--tRNA ligase type 1 subfamily. In terms of assembly, monomer.

Its subcellular location is the cytoplasm. It carries out the reaction tRNA(Glu) + L-glutamate + ATP = L-glutamyl-tRNA(Glu) + AMP + diphosphate. Its function is as follows. Catalyzes the attachment of glutamate to tRNA(Glu) in a two-step reaction: glutamate is first activated by ATP to form Glu-AMP and then transferred to the acceptor end of tRNA(Glu). This chain is Glutamate--tRNA ligase, found in Actinobacillus pleuropneumoniae serotype 7 (strain AP76).